A 167-amino-acid polypeptide reads, in one-letter code: Translation initiation factor IF-3 (167 aa).

It belongs to the IF-3 family. In terms of assembly, monomer.

It localises to the cytoplasm. IF-3 binds to the 30S ribosomal subunit and shifts the equilibrium between 70S ribosomes and their 50S and 30S subunits in favor of the free subunits, thus enhancing the availability of 30S subunits on which protein synthesis initiation begins. The sequence is that of Translation initiation factor IF-3 from Bacillus cereus (strain ATCC 14579 / DSM 31 / CCUG 7414 / JCM 2152 / NBRC 15305 / NCIMB 9373 / NCTC 2599 / NRRL B-3711).